The sequence spans 159 residues: Putative viral CXC chemokine 2 (159 aa).

2 disulfides stabilise this stretch: C50–C77 and C52–C93.

This sequence belongs to the intercrine alpha (chemokine CxC) family.

This is Putative viral CXC chemokine 2 (UL147) from Human cytomegalovirus (strain Towne) (HHV-5).